Here is a 508-residue protein sequence, read N- to C-terminus: Maturase K (508 aa).

It belongs to the intron maturase 2 family. MatK subfamily.

It localises to the plastid. It is found in the chloroplast. Usually encoded in the trnK tRNA gene intron. Probably assists in splicing its own and other chloroplast group II introns. This is Maturase K from Antirrhinum majus (Garden snapdragon).